A 48-amino-acid polypeptide reads, in one-letter code: Acidic phospholipase A2 (48 aa).

Ca(2+) contacts are provided by Tyr27, Gly29, and Gly31. Cys28 and Cys44 are oxidised to a cystine. His47 is an active-site residue. Asp48 is a Ca(2+) binding site.

The protein belongs to the phospholipase A2 family. Group II subfamily. D49 sub-subfamily. As to quaternary structure, monomer. Ca(2+) serves as cofactor. As to expression, expressed by the venom gland.

The protein resides in the secreted. It catalyses the reaction a 1,2-diacyl-sn-glycero-3-phosphocholine + H2O = a 1-acyl-sn-glycero-3-phosphocholine + a fatty acid + H(+). Its activity is regulated as follows. Inhibited by EDTA. Inhibited by Ba(2+), Cu(+), Fe(2+) and Zn(2+) ions and, to a lesser extent, by Mn(2+) and Mg(2+) ions. In terms of biological role, snake venom phospholipase A2 (PLA2) that shows myotoxicity and induces paw edema in mice. Exhibits indirect hemolytic activity. Inhibits platelet aggregation induced by ADP and collagen. PLA2 catalyzes the calcium-dependent hydrolysis of the 2-acyl groups in 3-sn-phosphoglycerides. This is Acidic phospholipase A2 from Bothrops pauloensis (Neuwied's lancehead).